The primary structure comprises 948 residues: Zinc finger CCCH domain-containing protein 3 (948 aa).

4 disordered regions span residues His-25 to Gln-108, Gln-121 to Val-219, Val-265 to Ser-296, and Asn-336 to Thr-493. Positions Arg-56–Tyr-74 are enriched in basic residues. Over residues Lys-128–Ala-141 the composition is skewed to low complexity. Residues Gln-157–Pro-166 are compositionally biased toward basic and acidic residues. A compositionally biased stretch (low complexity) spans Ser-372–Ala-398. Residues Ser-405–Pro-415 are compositionally biased toward polar residues. Ser-408 is modified (phosphoserine). Basic residues predominate over residues Val-441 to Ser-452. 5 consecutive C3H1-type zinc fingers follow at residues Glu-667–Glu-695, Val-699–Ser-722, Lys-723–Val-749, Ser-750–Leu-777, and Cys-778–Gln-800. Disordered stretches follow at residues Arg-798–Pro-891 and Ile-913–Leu-948. Polar residues predominate over residues Ser-834 to Ser-846. Composition is skewed to low complexity over residues Ala-847 to Ala-856 and Ser-864 to Ser-885. Phosphoserine occurs at positions 918 and 920.

Interacts with SMAD1, SMAD3, SMAD4, CPSF2 and CPSF3.

Its subcellular location is the nucleus. Required for the export of polyadenylated mRNAs from the nucleus. Enhances ACVR1B-induced SMAD-dependent transcription. Binds to single-stranded DNA but not to double-stranded DNA in vitro. Involved in RNA cleavage. The polypeptide is Zinc finger CCCH domain-containing protein 3 (ZC3H3) (Homo sapiens (Human)).